A 370-amino-acid chain; its full sequence is Phosphate acyltransferase (370 aa).

The tract at residues 349 to 370 (SAGRAGQDAPDEMAAPGRSEKR) is disordered.

Belongs to the PlsX family. Homodimer. Probably interacts with PlsY.

It is found in the cytoplasm. It carries out the reaction a fatty acyl-[ACP] + phosphate = an acyl phosphate + holo-[ACP]. The protein operates within lipid metabolism; phospholipid metabolism. Catalyzes the reversible formation of acyl-phosphate (acyl-PO(4)) from acyl-[acyl-carrier-protein] (acyl-ACP). This enzyme utilizes acyl-ACP as fatty acyl donor, but not acyl-CoA. The chain is Phosphate acyltransferase from Cereibacter sphaeroides (strain ATCC 17023 / DSM 158 / JCM 6121 / CCUG 31486 / LMG 2827 / NBRC 12203 / NCIMB 8253 / ATH 2.4.1.) (Rhodobacter sphaeroides).